Consider the following 378-residue polypeptide: Putative F-box only protein 15 (378 aa).

In terms of domain architecture, F-box spans 5–52 (KRVYRSLPFELVEEILKKTPAESLNRFKSTCKQWYGIITSKRFMYNHL).

The polypeptide is Putative F-box only protein 15 (FBX15) (Arabidopsis thaliana (Mouse-ear cress)).